Consider the following 156-residue polypeptide: Small ribosomal subunit protein uS7 (156 aa).

It belongs to the universal ribosomal protein uS7 family. Part of the 30S ribosomal subunit. Contacts proteins S9 and S11.

In terms of biological role, one of the primary rRNA binding proteins, it binds directly to 16S rRNA where it nucleates assembly of the head domain of the 30S subunit. Is located at the subunit interface close to the decoding center, probably blocks exit of the E-site tRNA. This is Small ribosomal subunit protein uS7 from Synechococcus sp. (strain CC9902).